A 186-amino-acid chain; its full sequence is Putative manganese efflux pump MntP (186 aa).

Helical transmembrane passes span 5 to 25 (VLIGEILTLSMMAFALGMDAF), 41 to 61 (VFQIGVIIGLFHVIMPLGGMI), 72 to 92 (ALAGYIGGALLLVLGIQMIVA), 107 to 127 (FGLFVFAVGVSLDSFSVGLSL), 135 to 155 (ILTIFLFGLFSMVLTWAGLLL), and 166 to 186 (YSEALGGAILLSFGLKLLLPI).

It belongs to the MntP (TC 9.B.29) family.

The protein localises to the cell membrane. Functionally, probably functions as a manganese efflux pump. The sequence is that of Putative manganese efflux pump MntP from Bacillus licheniformis (strain ATCC 14580 / DSM 13 / JCM 2505 / CCUG 7422 / NBRC 12200 / NCIMB 9375 / NCTC 10341 / NRRL NRS-1264 / Gibson 46).